Consider the following 607-residue polypeptide: UvrABC system protein C (607 aa).

A GIY-YIG domain is found at 16–94 (GRPGVYRMFD…IKEWRPPYNI (79 aa)). Residues 203–238 (NALSEELSASMEKASMALEFERAAELRDQISMLRRV) form the UVR domain.

This sequence belongs to the UvrC family. As to quaternary structure, interacts with UvrB in an incision complex.

It localises to the cytoplasm. In terms of biological role, the UvrABC repair system catalyzes the recognition and processing of DNA lesions. UvrC both incises the 5' and 3' sides of the lesion. The N-terminal half is responsible for the 3' incision and the C-terminal half is responsible for the 5' incision. The polypeptide is UvrABC system protein C (Ectopseudomonas mendocina (strain ymp) (Pseudomonas mendocina)).